The primary structure comprises 146 residues: MATPEASGSGEKVEGSEPSVTYYRLEEVAKRNSAEETWMVIHGRVYDITRFLSEHPGGEEVLLEQAGADATESFEDVGHSPDAREMLKQYYIGDVHPSDLKPKGDDKDPSKNNSCQSSWAYWFVPIVGAILIGFLYRHFWADSKSS.

A propeptide spanning residues 1 to 11 (MATPEASGSGE) is cleaved from the precursor. Residue Ser-19 is modified to Phosphoserine. In terms of domain architecture, Cytochrome b5 heme-binding spans 20–96 (VTYYRLEEVA…LKQYYIGDVH (77 aa)). Position 30 is an N6-acetyllysine (Lys-30). Residue Ser-33 is modified to Phosphoserine. Heme is bound by residues His-55 and His-79. A Phosphoserine modification is found at Ser-80. The chain crosses the membrane as a helical span at residues 119–136 (WAYWFVPIVGAILIGFLY).

It belongs to the cytochrome b5 family. As to quaternary structure, component of a complex composed of cytochrome b5, NADH-cytochrome b5 reductase (CYB5R3) and MTARC2.

It localises to the mitochondrion outer membrane. Functionally, cytochrome b5 is a membrane-bound hemoprotein functioning as an electron carrier for several membrane-bound oxygenases. The chain is Cytochrome b5 type B (Cyb5b) from Mus musculus (Mouse).